The chain runs to 310 residues: MLNVELPGLSLKNPIIPASGCFGFGREFASLYDLSVLGSIMIKATTLEPRFGNPTPRVAETGAGMLNAIGLQNPGLKGVLENELPWLEQFDTPIIANVAGSQVDDYVEVAEQISQAKNVHALELNISCPNVKTGGIAFGTDPQMAAALTKAVKDVSSVPVYVKLSPNVANIVEIAQAIESAGADGLTMINTLIGMRLDLKTGKPILANKTGGLSGPAIKPVAVRMVHEVSQAVSIPIIGMGGVQNAEDVLEFLLAGASAVAVGTANFVNPFICPEIIEELPNVLAAYGYSSVEECIGRSWKHEALAHHRA.

FMN contacts are provided by residues serine 19 and 43-44; that span reads KA. Residues lysine 43 and 67–71 contribute to the substrate site; that span reads NAIGL. FMN-binding residues include asparagine 97 and asparagine 125. Asparagine 125 contacts substrate. Cysteine 128 (nucleophile) is an active-site residue. Residues lysine 163 and isoleucine 189 each contribute to the FMN site. 190–191 provides a ligand contact to substrate; it reads NT. FMN-binding positions include glycine 215, 241-242, and 263-264; these read GG and GT.

Belongs to the dihydroorotate dehydrogenase family. Type 1 subfamily. As to quaternary structure, heterotetramer of 2 PyrK and 2 PyrD type B subunits. It depends on FMN as a cofactor.

The protein localises to the cytoplasm. It catalyses the reaction (S)-dihydroorotate + NAD(+) = orotate + NADH + H(+). Its pathway is pyrimidine metabolism; UMP biosynthesis via de novo pathway; orotate from (S)-dihydroorotate (NAD(+) route): step 1/1. Catalyzes the conversion of dihydroorotate to orotate with NAD(+) as electron acceptor. This Bacillus pumilus (strain SAFR-032) protein is Dihydroorotate dehydrogenase B (NAD(+)), catalytic subunit (pyrD).